Reading from the N-terminus, the 178-residue chain is Large ribosomal subunit protein uL6 (178 aa).

The protein belongs to the universal ribosomal protein uL6 family. In terms of assembly, part of the 50S ribosomal subunit.

In terms of biological role, this protein binds to the 23S rRNA, and is important in its secondary structure. It is located near the subunit interface in the base of the L7/L12 stalk, and near the tRNA binding site of the peptidyltransferase center. The sequence is that of Large ribosomal subunit protein uL6 from Staphylococcus epidermidis (strain ATCC 35984 / DSM 28319 / BCRC 17069 / CCUG 31568 / BM 3577 / RP62A).